The primary structure comprises 186 residues: Ribosome maturation factor RimM (186 aa).

The 74-residue stretch at 93-166 folds into the PRC barrel domain; the sequence is PDEYYDHQLM…RAVIDPPPGL (74 aa). The segment at 160 to 186 is disordered; the sequence is IDPPPGLIDDRAEVDSSDTEAATEADA. Residues 174 to 186 show a composition bias toward acidic residues; it reads DSSDTEAATEADA.

It belongs to the RimM family. As to quaternary structure, binds ribosomal protein uS19.

It localises to the cytoplasm. Its function is as follows. An accessory protein needed during the final step in the assembly of 30S ribosomal subunit, possibly for assembly of the head region. Essential for efficient processing of 16S rRNA. May be needed both before and after RbfA during the maturation of 16S rRNA. It has affinity for free ribosomal 30S subunits but not for 70S ribosomes. The sequence is that of Ribosome maturation factor RimM from Streptomyces avermitilis (strain ATCC 31267 / DSM 46492 / JCM 5070 / NBRC 14893 / NCIMB 12804 / NRRL 8165 / MA-4680).